The following is a 213-amino-acid chain: Vacuolar ATPase assembly integral membrane protein vph2 (213 aa).

2 helical membrane passes run 113 to 133 (ISAI…VWYC) and 142 to 162 (KIAL…FLYV).

It localises to the endoplasmic reticulum membrane. Required for vacuolar ATPase assembly. This Schizosaccharomyces pombe (strain 972 / ATCC 24843) (Fission yeast) protein is Vacuolar ATPase assembly integral membrane protein vph2 (vph2).